Reading from the N-terminus, the 355-residue chain is Uroporphyrinogen decarboxylase (355 aa).

Residues 23–27 (RQAGR), D72, Y148, S203, and H321 contribute to the substrate site.

It belongs to the uroporphyrinogen decarboxylase family. As to quaternary structure, homodimer.

The protein resides in the cytoplasm. It catalyses the reaction uroporphyrinogen III + 4 H(+) = coproporphyrinogen III + 4 CO2. The protein operates within porphyrin-containing compound metabolism; protoporphyrin-IX biosynthesis; coproporphyrinogen-III from 5-aminolevulinate: step 4/4. Its function is as follows. Catalyzes the decarboxylation of four acetate groups of uroporphyrinogen-III to yield coproporphyrinogen-III. This is Uroporphyrinogen decarboxylase from Chloroflexus aurantiacus (strain ATCC 29366 / DSM 635 / J-10-fl).